The following is a 546-amino-acid chain: Chaperonin GroEL 2 (546 aa).

ATP-binding positions include 30–33 (TLGP), Lys-51, 87–91 (DGTTT), Gly-415, 479–481 (NAA), and Asp-495.

It belongs to the chaperonin (HSP60) family. As to quaternary structure, forms a cylinder of 14 subunits composed of two heptameric rings stacked back-to-back. Interacts with the co-chaperonin GroES.

It localises to the cytoplasm. It catalyses the reaction ATP + H2O + a folded polypeptide = ADP + phosphate + an unfolded polypeptide.. In terms of biological role, together with its co-chaperonin GroES, plays an essential role in assisting protein folding. The GroEL-GroES system forms a nano-cage that allows encapsulation of the non-native substrate proteins and provides a physical environment optimized to promote and accelerate protein folding. This Chromobacterium violaceum (strain ATCC 12472 / DSM 30191 / JCM 1249 / CCUG 213 / NBRC 12614 / NCIMB 9131 / NCTC 9757 / MK) protein is Chaperonin GroEL 2.